A 213-amino-acid chain; its full sequence is NADH dehydrogenase [ubiquinone] iron-sulfur protein 7, mitochondrial (213 aa).

A mitochondrion-targeting transit peptide spans 1–37; the sequence is MAVLSAPGLRGFRILGLRSSVGPAVQARSVHQSVATD. Residues 30–44 show a composition bias toward polar residues; the sequence is VHQSVATDGPSSTQP. Residues 30 to 53 are disordered; sequence VHQSVATDGPSSTQPALPKARAVA. [4Fe-4S] cluster contacts are provided by Cys88 and Cys89. Arg111 bears the Hydroxyarginine mark. Cys153 and Cys183 together coordinate [4Fe-4S] cluster.

It belongs to the complex I 20 kDa subunit family. In terms of assembly, core subunit of respiratory chain NADH dehydrogenase (Complex I) which is composed of 45 different subunits. This is a component of the iron-sulfur (IP) fragment of the enzyme. [4Fe-4S] cluster is required as a cofactor. In terms of processing, hydroxylated ar Arg-111 by NDUFAF5 early in the pathway of assembly of complex I, before the formation of the juncture between peripheral and membrane arms.

It localises to the mitochondrion inner membrane. It carries out the reaction a ubiquinone + NADH + 5 H(+)(in) = a ubiquinol + NAD(+) + 4 H(+)(out). Its function is as follows. Core subunit of the mitochondrial membrane respiratory chain NADH dehydrogenase (Complex I) which catalyzes electron transfer from NADH through the respiratory chain, using ubiquinone as an electron acceptor. Essential for the catalytic activity of complex I. In Pan troglodytes (Chimpanzee), this protein is NADH dehydrogenase [ubiquinone] iron-sulfur protein 7, mitochondrial (NDUFS7).